The primary structure comprises 169 residues: Probable glutathione peroxidase 2 (169 aa).

C41 is an active-site residue.

It belongs to the glutathione peroxidase family. Interacts with DJ1A. In terms of tissue distribution, expressed in leaves, stems, flowers, green siliques and roots.

The protein resides in the cytoplasm. The protein localises to the cytosol. It is found in the nucleus. It carries out the reaction 2 glutathione + H2O2 = glutathione disulfide + 2 H2O. In terms of biological role, may constitute a glutathione peroxidase-like protective system against oxidative stresses. The sequence is that of Probable glutathione peroxidase 2 (GPX2) from Arabidopsis thaliana (Mouse-ear cress).